Here is a 329-residue protein sequence, read N- to C-terminus: DNA-directed RNA polymerase subunit alpha (329 aa).

The interval 1-235 (MQNSIMDFLR…EQLEAFVDLR (235 aa)) is alpha N-terminal domain (alpha-NTD). An alpha C-terminal domain (alpha-CTD) region spans residues 249-329 (FEPILLRPVD…NWPPSSILDE (81 aa)).

It belongs to the RNA polymerase alpha chain family. In terms of assembly, homodimer. The RNAP catalytic core consists of 2 alpha, 1 beta, 1 beta' and 1 omega subunit. When a sigma factor is associated with the core the holoenzyme is formed, which can initiate transcription.

It carries out the reaction RNA(n) + a ribonucleoside 5'-triphosphate = RNA(n+1) + diphosphate. Functionally, DNA-dependent RNA polymerase catalyzes the transcription of DNA into RNA using the four ribonucleoside triphosphates as substrates. The sequence is that of DNA-directed RNA polymerase subunit alpha from Buchnera aphidicola subsp. Acyrthosiphon pisum (strain APS) (Acyrthosiphon pisum symbiotic bacterium).